The following is a 208-amino-acid chain: Methylthioribulose-1-phosphate dehydratase (208 aa).

His-98 and His-100 together coordinate Zn(2+).

Belongs to the aldolase class II family. MtnB subfamily. The cofactor is Zn(2+).

It catalyses the reaction 5-(methylsulfanyl)-D-ribulose 1-phosphate = 5-methylsulfanyl-2,3-dioxopentyl phosphate + H2O. Its pathway is amino-acid biosynthesis; L-methionine biosynthesis via salvage pathway; L-methionine from S-methyl-5-thio-alpha-D-ribose 1-phosphate: step 2/6. Its function is as follows. Catalyzes the dehydration of methylthioribulose-1-phosphate (MTRu-1-P) into 2,3-diketo-5-methylthiopentyl-1-phosphate (DK-MTP-1-P). The sequence is that of Methylthioribulose-1-phosphate dehydratase from Hahella chejuensis (strain KCTC 2396).